Here is a 456-residue protein sequence, read N- to C-terminus: UDP-N-acetylglucosamine 1-carboxyvinyltransferase (456 aa).

Lys-34 to Asn-35 is a binding site for phosphoenolpyruvate. Arg-104 serves as a coordination point for UDP-N-acetyl-alpha-D-glucosamine. Cys-128 serves as the catalytic Proton donor. Residue Cys-128 is modified to 2-(S-cysteinyl)pyruvic acid O-phosphothioketal. Asp-319 and Ile-341 together coordinate UDP-N-acetyl-alpha-D-glucosamine.

This sequence belongs to the EPSP synthase family. MurA subfamily.

The protein resides in the cytoplasm. It catalyses the reaction phosphoenolpyruvate + UDP-N-acetyl-alpha-D-glucosamine = UDP-N-acetyl-3-O-(1-carboxyvinyl)-alpha-D-glucosamine + phosphate. Its pathway is cell wall biogenesis; peptidoglycan biosynthesis. Cell wall formation. Adds enolpyruvyl to UDP-N-acetylglucosamine. This Prochlorococcus marinus (strain MIT 9312) protein is UDP-N-acetylglucosamine 1-carboxyvinyltransferase.